Consider the following 114-residue polypeptide: Flagellar hook-basal body complex protein FliE (114 aa).

Belongs to the FliE family.

It is found in the bacterial flagellum basal body. This Burkholderia vietnamiensis (strain G4 / LMG 22486) (Burkholderia cepacia (strain R1808)) protein is Flagellar hook-basal body complex protein FliE.